A 366-amino-acid chain; its full sequence is MQYKSQNFSHSQNPKTGVLLVNLGTPAAPTAKALKPYLKQFLSDPRVVEFPRLLWWLILNGIILNVRPRKSAAAYAKVWTERGSPLAIHTADQASALNVRLQRRFDDQVVVAWAMRYGSPSMADVQQSLFDQGVQQLLVIPLYPQYSAATTGSTFDALSADFQRRRWLPALRFVNQYHDNPGYIAALAERVRQHWQNNGRADKLILSYHGVPLRYLHAGDPYHCQCLATSRLLAEALQLTESEVITSFQSRFGREEWLQPYTDVLLKQLPGAGVKSVQIMCPGFSSDCLETIEEIGEENREYFLQNGGENYQYIPALNAGEDHIDVLEQLVLDNLQGWSLAPTAKRELEQRQQRADSCPFNQTKKL.

H209 and E290 together coordinate Fe cation.

Belongs to the ferrochelatase family.

The protein localises to the cytoplasm. It carries out the reaction heme b + 2 H(+) = protoporphyrin IX + Fe(2+). The protein operates within porphyrin-containing compound metabolism; protoheme biosynthesis; protoheme from protoporphyrin-IX: step 1/1. Functionally, catalyzes the ferrous insertion into protoporphyrin IX. This Teredinibacter turnerae (strain ATCC 39867 / T7901) protein is Ferrochelatase.